A 36-amino-acid chain; its full sequence is Pancreatic polypeptide (36 aa).

Y36 is modified (tyrosine amide).

It belongs to the NPY family.

It is found in the secreted. In terms of biological role, hormone secreted by pancreatic cells that acts as a regulator of pancreatic and gastrointestinal functions probably by signaling through the G protein-coupled receptor NPY4R2. In Erinaceus europaeus (Western European hedgehog), this protein is Pancreatic polypeptide (PPY).